The sequence spans 444 residues: Aspartate--tRNA(Asp/Asn) ligase (444 aa).

Residue glutamate 176 coordinates L-aspartate. The aspartate stretch occupies residues glutamine 198–lysine 201. Arginine 220 contributes to the L-aspartate binding site. ATP contacts are provided by residues arginine 220–glutamate 222, arginine 228–leucine 230, and glutamate 367. The Mg(2+) site is built by glutamate 367 and serine 370. L-aspartate contacts are provided by serine 370 and arginine 374. Residue glycine 415–arginine 418 participates in ATP binding.

This sequence belongs to the class-II aminoacyl-tRNA synthetase family. Type 2 subfamily. In terms of assembly, homodimer. Mg(2+) serves as cofactor.

Its subcellular location is the cytoplasm. The enzyme catalyses tRNA(Asx) + L-aspartate + ATP = L-aspartyl-tRNA(Asx) + AMP + diphosphate. Functionally, aspartyl-tRNA synthetase with relaxed tRNA specificity since it is able to aspartylate not only its cognate tRNA(Asp) but also tRNA(Asn). Reaction proceeds in two steps: L-aspartate is first activated by ATP to form Asp-AMP and then transferred to the acceptor end of tRNA(Asp/Asn). In Methanosarcina barkeri (strain Fusaro / DSM 804), this protein is Aspartate--tRNA(Asp/Asn) ligase.